The primary structure comprises 201 residues: uncharacterized protein (201 aa).

It belongs to the methyltransferase superfamily.

This is an uncharacterized protein from Bacillus subtilis (strain 168).